Consider the following 107-residue polypeptide: U1-lycotoxin-Ls1b (107 aa).

A signal peptide spans 1–20 (MMKVLVVVALLVTLISYSSS). A propeptide spanning residues 21 to 41 (EGIDDLEADELLSLMANEQTR) is cleaved from the precursor. Disulfide bonds link Cys-44–Cys-59, Cys-51–Cys-68, Cys-58–Cys-86, and Cys-70–Cys-84.

It belongs to the neurotoxin 19 (CSTX) family. 04 (U1-Lctx) subfamily. As to expression, expressed by the venom gland.

It is found in the secreted. This chain is U1-lycotoxin-Ls1b, found in Lycosa singoriensis (Wolf spider).